The sequence spans 84 residues: MKRMILFISCLLLIDIVVGGREGYPADSKGCKITCFLTAAGYCNTECTLKKGSSGYCAWPACYCYGLPDSVKIWTSETNKCGKK.

Positions 1–19 are cleaved as a signal peptide; sequence MKRMILFISCLLLIDIVVG. An LCN-type CS-alpha/beta domain is found at 21–82; it reads REGYPADSKG…IWTSETNKCG (62 aa). Intrachain disulfides connect C31–C81, C35–C57, C43–C62, and C47–C64. A Cysteine amide modification is found at C81. Residues 82–84 constitute a propeptide that is removed on maturation; it reads GKK.

The protein belongs to the long (4 C-C) scorpion toxin superfamily. Sodium channel inhibitor family. Alpha subfamily. Expressed by the venom gland.

Its subcellular location is the secreted. Its function is as follows. Not toxic. Induces an immune response similar to that induced by whole venom. Induces a dose dependent release of the neurotransmitters glutamic acid and gamma aminobutyric acid from rat brain synaptosomes. Thus, polyclonal antibodies raised against this protein can neutralize the effects of the venom. In Tityus serrulatus (Brazilian scorpion), this protein is Toxin Ts4.